Consider the following 1010-residue polypeptide: Ubiquitin conjugation factor E4 (1010 aa).

A disordered region spans residues 13-70 (AKLQQTNSEANSSKEPKESNIAPEPKKPDLKKRFIGSKATTSNSEQKEISPPVTSGAP). A compositionally biased stretch (basic and acidic residues) spans 24 to 44 (SSKEPKESNIAPEPKKPDLKK). Positions 930-1004 (DIPDYFLDPL…NTFLKSKRNK (75 aa)) constitute a U-box domain.

The protein belongs to the ubiquitin conjugation factor E4 family.

Its subcellular location is the cytoplasm. It localises to the nucleus. It functions in the pathway protein modification; protein ubiquitination. In terms of biological role, E4 ubiquitin chain-elongation enzyme specifically involved in polyubiquitin chain assembly. Binds to cdc48 and elongates mono- and diubiquitinated ERAD substrates presented by the ufd1-npl4-cdc48 (UNC) AAA ATPase complex to a chain length of 4 to 6 ubiquitin moieties. Delivers these polyubiquitinated substrates to downstream ERAD components, which target them to the proteasome. Enhances ubiquitination at 'Lys-48', but not at 'Lys-29' of the Ub moiety. The chain is Ubiquitin conjugation factor E4 (ufd2) from Schizosaccharomyces pombe (strain 972 / ATCC 24843) (Fission yeast).